Reading from the N-terminus, the 51-residue chain is Large ribosomal subunit protein eL39z (51 aa).

This sequence belongs to the eukaryotic ribosomal protein eL39 family.

The chain is Large ribosomal subunit protein eL39z (RPL39A) from Oryza sativa subsp. japonica (Rice).